Reading from the N-terminus, the 233-residue chain is Histidinol dehydrogenase (233 aa).

Residues S31, Q53, and H56 each contribute to the substrate site. The Zn(2+) site is built by Q53 and H56. Catalysis depends on proton acceptor residues E121 and H122. Substrate-binding residues include H122, D155, E209, and H214. Residue D155 coordinates Zn(2+). Position 214 (H214) interacts with Zn(2+).

It belongs to the histidinol dehydrogenase family. Zn(2+) serves as cofactor.

The enzyme catalyses L-histidinol + 2 NAD(+) + H2O = L-histidine + 2 NADH + 3 H(+). It participates in amino-acid biosynthesis; L-histidine biosynthesis; L-histidine from 5-phospho-alpha-D-ribose 1-diphosphate: step 9/9. Its function is as follows. Catalyzes the sequential NAD-dependent oxidations of L-histidinol to L-histidinaldehyde and then to L-histidine. The chain is Histidinol dehydrogenase (hisD) from Thiocapsa roseopersicina.